The following is a 161-amino-acid chain: Phosphopantetheine adenylyltransferase (161 aa).

Serine 9 contributes to the substrate binding site. ATP contacts are provided by residues 9–10 (SF) and histidine 17. Substrate is bound by residues lysine 41, threonine 73, and arginine 87. Residues 88–90 (GLR), glutamate 98, and 123–129 (FAHISST) each bind ATP.

The protein belongs to the bacterial CoaD family. In terms of assembly, homohexamer. Requires Mg(2+) as cofactor.

The protein resides in the cytoplasm. The catalysed reaction is (R)-4'-phosphopantetheine + ATP + H(+) = 3'-dephospho-CoA + diphosphate. Its pathway is cofactor biosynthesis; coenzyme A biosynthesis; CoA from (R)-pantothenate: step 4/5. In terms of biological role, reversibly transfers an adenylyl group from ATP to 4'-phosphopantetheine, yielding dephospho-CoA (dPCoA) and pyrophosphate. The sequence is that of Phosphopantetheine adenylyltransferase from Chloroflexus aggregans (strain MD-66 / DSM 9485).